Here is a 523-residue protein sequence, read N- to C-terminus: MSFRKEDGVSSLCQKALHIITELCFAGQVEWDKCSGIFPADRSGQGGGGTDISVSLLAVVVSFCGLALLVVSLFVFWKLCWPCWKSKLVAPNVSTLPQSISSAPTEVFETEEKKEVEENEKPAPKAIEPAIKISHTSPDIPAEVQTALKEHLIKHARVQRQTTDPTSSSRHNSFRRHLPRQMNVSSVDFSMGTEPVLQRGETRTSIGRIKPELYKQKSVDSEGNRKDDVKTCGKLNFALQYDYENELLVVKIIKALDLPAKDFTGTSDPYVKIYLLPDRKKKFQTRVHRKTLNPLFDELFQFPVVYDQLSNRKLHFSIYDFDRFSRHDMIGEVILDNLFEVSDLSREATVWKDIHCATTESIDLGEIMFSLCYLPTAGRMTLTVIKCRNLKAMDITGSSDPYVKVSLMCEGRRLKKRKTTTKKNTLNPVYNEAIIFDIPPENVDQVSLCIAVMDYDRVGHNEVIGVCRTGLDAEGLGRDHWNEMLAYHRKPITHWHPLLELPGRATSFDSQGSCSSPRPPSTP.

Residues 1-55 (MSFRKEDGVSSLCQKALHIITELCFAGQVEWDKCSGIFPADRSGQGGGGTDISVS) are Vesicular-facing. The interval 13–35 (CQKALHIITELCFAGQVEWDKCS) is cysteine motif. A helical transmembrane segment spans residues 56–76 (LLAVVVSFCGLALLVVSLFVF). The Cytoplasmic portion of the chain corresponds to 77 to 523 (WKLCWPCWKS…CSSPRPPSTP (447 aa)). Threonine 136 is modified (phosphothreonine). C2 domains are found at residues 231–352 (TCGK…TVWK) and 363–496 (DLGE…THWH). The Ca(2+) site is built by aspartate 262, aspartate 268, aspartate 320, phenylalanine 321, aspartate 322, serine 325, aspartate 328, aspartate 394, aspartate 400, aspartate 454, and aspartate 456.

This sequence belongs to the synaptotagmin family. In terms of assembly, homodimer; disulfide-linked via the cysteine motif. Can also form heterodimers with SYT3, SYT6, SYT7 and SYT9. The cofactor is Ca(2+).

The protein resides in the cytoplasmic vesicle. It localises to the secretory vesicle membrane. In terms of biological role, ca(2+) sensor specifically required for the Ca(2+)-dependent exocytosis of secretory vesicles containing IGF1 in neurons of the olfactory bulb. Exocytosis of IGF1 is required for sensory perception of smell. Not involved in Ca(2+)-dependent synaptic vesicle exocytosis. Acts through Ca(2+) and phospholipid binding to the C2 domain: Ca(2+) induces binding of the C2-domains to phospholipid membranes and to assembled SNARE-complexes; both actions contribute to triggering exocytosis. The polypeptide is Synaptotagmin-10 (Syt10) (Rattus norvegicus (Rat)).